Reading from the N-terminus, the 1520-residue chain is DNA-directed RNA polymerase subunit beta'' (1520 aa).

The Zn(2+) site is built by cysteine 220, cysteine 296, cysteine 303, and cysteine 306. 2 stretches are compositionally biased toward basic and acidic residues: residues 645–654 and 664–674; these read TREEEYRTRE and PENKYRTREGE. Disordered stretches follow at residues 645 to 676 and 705 to 786; these read TREE…GEGE and YRTL…KKEG. Acidic residues-rich tracts occupy residues 730-748 and 756-779; these read GEYE…SSED and TLEE…PEED.

This sequence belongs to the RNA polymerase beta' chain family. RpoC2 subfamily. As to quaternary structure, in plastids the minimal PEP RNA polymerase catalytic core is composed of four subunits: alpha, beta, beta', and beta''. When a (nuclear-encoded) sigma factor is associated with the core the holoenzyme is formed, which can initiate transcription. Zn(2+) is required as a cofactor.

The protein localises to the plastid. It localises to the chloroplast. The catalysed reaction is RNA(n) + a ribonucleoside 5'-triphosphate = RNA(n+1) + diphosphate. Functionally, DNA-dependent RNA polymerase catalyzes the transcription of DNA into RNA using the four ribonucleoside triphosphates as substrates. The sequence is that of DNA-directed RNA polymerase subunit beta'' from Sorghum bicolor (Sorghum).